Here is a 930-residue protein sequence, read N- to C-terminus: Pyruvate dehydrogenase E1 component (930 aa).

Positions 1–10 are enriched in basic and acidic residues; it reads MTTDFARHDL. Residues 1-21 are disordered; sequence MTTDFARHDLAQNSNSASEPD. Residue Lys-375 forms an Isoglutamyl lysine isopeptide (Lys-Gln) (interchain with Q-Cter in protein Pup) linkage.

As to quaternary structure, homodimer. Part of the PDH complex, consisting of multiple copies of AceE (E1), DlaT (E2) and Lpd (E3). Requires Mg(2+) as cofactor. Thiamine diphosphate serves as cofactor.

The enzyme catalyses N(6)-[(R)-lipoyl]-L-lysyl-[protein] + pyruvate + H(+) = N(6)-[(R)-S(8)-acetyldihydrolipoyl]-L-lysyl-[protein] + CO2. Functionally, component of the pyruvate dehydrogenase (PDH) complex, that catalyzes the overall conversion of pyruvate to acetyl-CoA and CO(2). AceE has reductase activity with pyruvate but does not react with 2-oxoglutarate. In Mycobacterium tuberculosis (strain ATCC 25618 / H37Rv), this protein is Pyruvate dehydrogenase E1 component (aceE).